Consider the following 25-residue polypeptide: Bifunctional chitinase/lysozyme (25 aa).

This sequence belongs to the glycosyl hydrolase 19 family. Chitinase class I subfamily. In terms of assembly, monomer.

It is found in the secreted. It localises to the extracellular space. The enzyme catalyses Random endo-hydrolysis of N-acetyl-beta-D-glucosaminide (1-&gt;4)-beta-linkages in chitin and chitodextrins.. It catalyses the reaction Hydrolysis of (1-&gt;4)-beta-linkages between N-acetylmuramic acid and N-acetyl-D-glucosamine residues in a peptidoglycan and between N-acetyl-D-glucosamine residues in chitodextrins.. Its function is as follows. Bifunctional enzyme with lysozyme/chitinase activity. The polypeptide is Bifunctional chitinase/lysozyme (Carica papaya (Papaya)).